We begin with the raw amino-acid sequence, 123 residues long: ATP synthase epsilon chain (123 aa).

The protein belongs to the ATPase epsilon chain family. F-type ATPases have 2 components, CF(1) - the catalytic core - and CF(0) - the membrane proton channel. CF(1) has five subunits: alpha(3), beta(3), gamma(1), delta(1), epsilon(1). CF(0) has three main subunits: a, b and c.

The protein resides in the cell inner membrane. In terms of biological role, produces ATP from ADP in the presence of a proton gradient across the membrane. The sequence is that of ATP synthase epsilon chain from Helicobacter pylori (strain P12).